A 130-amino-acid polypeptide reads, in one-letter code: Small ribosomal subunit protein uS8 (130 aa).

This sequence belongs to the universal ribosomal protein uS8 family. In terms of assembly, part of the 30S ribosomal subunit.

Functionally, one of the primary rRNA binding proteins, it binds directly to 16S rRNA central domain where it helps coordinate assembly of the platform of the 30S subunit. This is Small ribosomal subunit protein uS8 from Pyrococcus abyssi (strain GE5 / Orsay).